The following is a 485-amino-acid chain: D-alanine--D-alanyl carrier protein ligase (485 aa).

144-145 (TS) contacts ATP. Asp-189 is a D-alanine binding site. Residue 284-289 (NTYGPT) participates in ATP binding. Residue Val-293 participates in D-alanine binding. ATP is bound by residues Asp-365 and Lys-473. Residue Lys-473 coordinates D-alanine.

It belongs to the ATP-dependent AMP-binding enzyme family. DltA subfamily.

The protein localises to the cytoplasm. The enzyme catalyses holo-[D-alanyl-carrier protein] + D-alanine + ATP = D-alanyl-[D-alanyl-carrier protein] + AMP + diphosphate. It functions in the pathway cell wall biogenesis; lipoteichoic acid biosynthesis. Its function is as follows. Catalyzes the first step in the D-alanylation of lipoteichoic acid (LTA), the activation of D-alanine and its transfer onto the D-alanyl carrier protein (Dcp) DltC. In an ATP-dependent two-step reaction, forms a high energy D-alanyl-AMP intermediate, followed by transfer of the D-alanyl residue as a thiol ester to the phosphopantheinyl prosthetic group of the Dcp. D-alanylation of LTA plays an important role in modulating the properties of the cell wall in Gram-positive bacteria, influencing the net charge of the cell wall. This chain is D-alanine--D-alanyl carrier protein ligase, found in Staphylococcus aureus (strain MRSA252).